The primary structure comprises 282 residues: Bifunctional protein FolD (282 aa).

Residues 165 to 167, Ser-190, and Ile-231 contribute to the NADP(+) site; that span reads NRS.

Belongs to the tetrahydrofolate dehydrogenase/cyclohydrolase family. As to quaternary structure, homodimer.

It catalyses the reaction (6R)-5,10-methylene-5,6,7,8-tetrahydrofolate + NADP(+) = (6R)-5,10-methenyltetrahydrofolate + NADPH. The catalysed reaction is (6R)-5,10-methenyltetrahydrofolate + H2O = (6R)-10-formyltetrahydrofolate + H(+). Its pathway is one-carbon metabolism; tetrahydrofolate interconversion. In terms of biological role, catalyzes the oxidation of 5,10-methylenetetrahydrofolate to 5,10-methenyltetrahydrofolate and then the hydrolysis of 5,10-methenyltetrahydrofolate to 10-formyltetrahydrofolate. The chain is Bifunctional protein FolD from Clostridium botulinum (strain 657 / Type Ba4).